The following is a 989-amino-acid chain: MSQYSDDDYSHEDDSEMEDEDEEDEYEPRSSRKGRSGKKRGRSNSDSDGRRGSKKKSSGSAFIDWEVEVDDDVEDDDDDVDVEDGKQQLKFGDFSLCFIVSGEADLPNEDSDHRRQYYQRGFHPHEEDVDELEKRTLERLSTKYAKDDYELDDVNDVDQQALLPSVRDPKLWLVKCAIGREREVAVCLMQKIVDRGSEFKIRSAIALDHLQNYVYIEADMEAHVKEAIKGMRNIYANQKILLVPIKEMTAVLSVESKAIDLSRDSWVRMKLGIYKGDLAQVVDVDNVRKRVTVKLIPRIDLQALANKLEGTENVKKKAFAPPPRFMNIDEARELHIRVEHRRDPMTGDYFENIGGMLFKDGFLYKKVSTKSIAAQNVTPTFDELERFKRPNENGEIDFVDESTLFANRKKGHFMKGDAVIVIKGDLKNLKGWIEKVDEENVLIRSEMKDLPNPIAVNGRELCKYFEPGNFVKVVSGIHEGGTGMIVKVDQHMLIILSDTTKEHICVFADHVAKSAEVTKGVTKIGDYELHDLVILSDFSFGVILKLDSEAIQILKGVPDSSEVSIVKASEIKYKIWKKINVQDRYKNVVAVKDVVRVIEGPSKGKQGPVVQIYKGVLFIHDRHNLEHTGFICTRCSSCVLAGGNFKTPALVPPSPRRFQRADMGYNPGAGGRHQGGRGRRGDDHLVGTYVKIRLGPFKGYSGRLVEVKDKLVRVELEAKIVTVERKAISDMTDNVVATPQYNMGSQTPMHPSRTPLHPCMTPMRHSGATPIHDGMRTPMRGRAWNPYMPMSPPRDNWEDGNPGSWGTSPYEAATPGSDWGSSTPGRSSYRDAGTPINNANAPSPMTPSSTSYLPTTPGGQAMTPGTDLDVMSLDIGGDAETRFIPGILVNVHKAGEDRNPGVIRDVLPDGSCVVALGHRGEGETIRATQNKVSLVCPKKNERVKILGGKYCGSTAKVIGEDGQDGIVKLDESLDIKILKLTILAKLVHE.

The span at 1–26 (MSQYSDDDYSHEDDSEMEDEDEEDEY) shows a compositional bias: acidic residues. The tract at residues 1-82 (MSQYSDDDYS…VEDDDDDVDV (82 aa)) is disordered. The span at 31–42 (SRKGRSGKKRGR) shows a compositional bias: basic residues. Residues 65–82 (WEVEVDDDVEDDDDDVDV) show a composition bias toward acidic residues. KOW domains are found at residues 260 to 287 (DLSR…VDNV), 412 to 439 (HFMK…VDEE), 464 to 491 (YFEP…VDQH), 588 to 615 (VVAV…IYKG), and 683 to 710 (DHLV…VKDK). The segment at 790–852 (MSPPRDNWED…SPMTPSSTSY (63 aa)) is disordered. Residues 842–852 (PSPMTPSSTSY) show a composition bias toward low complexity. Positions 936 to 963 (CPKKNERVKILGGKYCGSTAKVIGEDGQ) constitute a KOW 6 domain.

Belongs to the SPT5 family.

The protein resides in the nucleus. May regulate transcription elongation by RNA polymerase II. May enhance transcriptional pausing at sites proximal to the promoter, which may in turn facilitate the assembly of an elongation competent RNA polymerase II complex. The polypeptide is Putative transcription elongation factor SPT5 homolog 2 (Arabidopsis thaliana (Mouse-ear cress)).